The primary structure comprises 521 residues: Forkhead box protein N4 (521 aa).

The fork-head DNA-binding region spans 197 to 293; the sequence is KPIYSYSCLI…EEMHKWKRKD (97 aa). The segment at 371 to 406 is disordered; sequence PQAHLAPDSPAPAQTPPLHALPSLSPGPLPQPAMGR.

In terms of tissue distribution, mainly expressed in proliferator progenitor cells in brain and retina rather than differentiated cells. In contrast, is expressed only in postmitotic epithelial cells rather than in proliferative progenitors in the proximal airway.

The protein localises to the nucleus. In terms of biological role, transcription factor essential for neural and some non-neural tissues development, such as retina and lung respectively. Binds to an 11-bp consensus sequence containing the invariant tetranucleotide 5'-ACGC-3'. During development of the central nervous system, is required to specify the amacrine and horizontal cell fates from multipotent retinal progenitors while suppressing the alternative photoreceptor cell fates through activating DLL4-NOTCH signaling. Also acts synergistically with ASCL1/MASH1 to activate DLL4-NOTCH signaling and drive commitment of p2 progenitors to the V2b interneuron fates during spinal cord neurogenesis. In development of non-neural tissues, plays an essential role in the specification of the atrioventricular canal and is indirectly required for patterning the distal airway during lung development. The chain is Forkhead box protein N4 (Foxn4) from Mus musculus (Mouse).